A 298-amino-acid chain; its full sequence is UDP-N-acetylenolpyruvoylglucosamine reductase (298 aa).

The FAD-binding PCMH-type domain occupies 26 to 191 (KTGGEAEYLA…LSATFSLTPG (166 aa)). Arg-170 is a catalytic residue. Ser-220 functions as the Proton donor in the catalytic mechanism. The active site involves Glu-290.

It belongs to the MurB family. The cofactor is FAD.

It is found in the cytoplasm. The enzyme catalyses UDP-N-acetyl-alpha-D-muramate + NADP(+) = UDP-N-acetyl-3-O-(1-carboxyvinyl)-alpha-D-glucosamine + NADPH + H(+). The protein operates within cell wall biogenesis; peptidoglycan biosynthesis. Its function is as follows. Cell wall formation. The protein is UDP-N-acetylenolpyruvoylglucosamine reductase of Lactobacillus helveticus (strain DPC 4571).